Reading from the N-terminus, the 95-residue chain is Scytovirin (95 aa).

The SD1 stretch occupies residues G3–T41. Intrachain disulfides connect C7–C55, C20–C32, C26–C38, C68–C80, and C74–C86. The tract at residues G51 to T89 is SD2.

Its function is as follows. Has strong anti-HIV activity against T-tropic strains of HIV-1 and weaker activity against M-tropic strains of HIV-1. Inhibits HIV-1 fusion and infection of CD4 LTR beta-gal cells in vitro. Inhibits fusion of HIV infected CEM-SS cells with uninfected CEM-SS cells, and fusion of HIV-1 Env expressing HL2/3 cells with CD4 LTR beta-gal cells. Binds to HIV gp120, HIV gp160 and to a lesser extent HIV gp41. Binding to HIV gp120 is glycosylation dependent. Binds with high specificity to the tetrasaccharide Man-alpha-1,2-Man-alpha-1,6-Man-alpha-1,6-Man and also binds the higher-order oligosaccharides oligomannose 8 and oligomannose 9. Does not bind to monosaccharides, complex or hybrid N-linked oligosaccharides or chitin. This Scytonema varium protein is Scytovirin.